A 284-amino-acid chain; its full sequence is Diaminopimelate epimerase (284 aa).

Residues N20, Q53, and N73 each contribute to the substrate site. C82 (proton donor) is an active-site residue. Substrate-binding positions include 83-84, N167, N200, and 218-219; these read GN and ER. C227 (proton acceptor) is an active-site residue. 228-229 contacts substrate; the sequence is GS.

It belongs to the diaminopimelate epimerase family. As to quaternary structure, homodimer.

It is found in the cytoplasm. The catalysed reaction is (2S,6S)-2,6-diaminopimelate = meso-2,6-diaminopimelate. Its pathway is amino-acid biosynthesis; L-lysine biosynthesis via DAP pathway; DL-2,6-diaminopimelate from LL-2,6-diaminopimelate: step 1/1. Functionally, catalyzes the stereoinversion of LL-2,6-diaminopimelate (L,L-DAP) to meso-diaminopimelate (meso-DAP), a precursor of L-lysine and an essential component of the bacterial peptidoglycan. This chain is Diaminopimelate epimerase, found in Xanthomonas oryzae pv. oryzae (strain MAFF 311018).